Reading from the N-terminus, the 618-residue chain is Sulfite reductase [NADPH] flavoprotein alpha-component (618 aa).

The 139-residue stretch at 64-202 (VTLISASQTG…QAQQWRQQVV (139 aa)) folds into the Flavodoxin-like domain. FMN-binding positions include 70 to 75 (SQTGNA), 117 to 120 (STQG), and 153 to 162 (LGDTSYEHFC). Residues 253–467 (TAPLTAQLSV…IEHNDNFRLP (215 aa)) enclose the FAD-binding FR-type domain. FAD contacts are provided by residues T341, K375, 405 to 408 (RLYS), 423 to 425 (TVG), Y429, and 438 to 441 (GGAS). Residues 538-539 (SR), 544-548 (KIYVQ), and D580 each bind NADP(+). Residue Y618 participates in FAD binding.

The protein belongs to the NADPH-dependent sulphite reductase flavoprotein subunit CysJ family. In the N-terminal section; belongs to the flavodoxin family. This sequence in the C-terminal section; belongs to the flavoprotein pyridine nucleotide cytochrome reductase family. As to quaternary structure, alpha(8)-beta(8). The alpha component is a flavoprotein, the beta component is a hemoprotein. The cofactor is FAD. Requires FMN as cofactor.

It carries out the reaction hydrogen sulfide + 3 NADP(+) + 3 H2O = sulfite + 3 NADPH + 4 H(+). It participates in sulfur metabolism; hydrogen sulfide biosynthesis; hydrogen sulfide from sulfite (NADPH route): step 1/1. Component of the sulfite reductase complex that catalyzes the 6-electron reduction of sulfite to sulfide. This is one of several activities required for the biosynthesis of L-cysteine from sulfate. The flavoprotein component catalyzes the electron flow from NADPH -&gt; FAD -&gt; FMN to the hemoprotein component. This Yersinia pseudotuberculosis serotype I (strain IP32953) protein is Sulfite reductase [NADPH] flavoprotein alpha-component.